The sequence spans 442 residues: Citrate synthase (442 aa).

Active-site residues include His274, His320, and Asp375.

It belongs to the citrate synthase family.

It carries out the reaction oxaloacetate + acetyl-CoA + H2O = citrate + CoA + H(+). The protein operates within carbohydrate metabolism; tricarboxylic acid cycle; isocitrate from oxaloacetate: step 1/2. Functionally, catalyzes both citrate generation and citrate cleavage. Part of a reversible tricarboxylic acid (TCA) cycle that can fix carbon dioxide autotrophically and may represent an ancestral mode of the conventional reductive TCA (rTCA) cycle. The direction is controlled by the available carbon source(s). The polypeptide is Citrate synthase (Thermosulfidibacter takaii (strain DSM 17441 / JCM 13301 / NBRC 103674 / ABI70S6)).